A 768-amino-acid polypeptide reads, in one-letter code: Photosystem I P700 chlorophyll a apoprotein A1 (768 aa).

8 helical membrane passes run 76–99 (VFSA…FHGA), 162–185 (LMAL…YHYH), 201–225 (LNHH…HIGA), 310–328 (ISHH…GHLY), 369–392 (WHAQ…HHMY), 408–434 (LGLF…IAMI), 456–478 (ALIS…LYIH), and 559–577 (FMIH…LILL). Positions 601 and 610 each coordinate [4Fe-4S] cluster. 2 helical membrane-spanning segments follow: residues 617 to 638 (HVFL…HFSW) and 682 to 704 (ISMY…MFLF). His-693 contributes to the divinylchlorophyll a' binding site. Positions 701 and 709 each coordinate divinyl chlorophyll a. Trp-710 contacts phylloquinone. The helical transmembrane segment at 742–762 (AVGAAHFLLGGIATTWAFFHA) threads the bilayer.

This sequence belongs to the PsaA/PsaB family. As to quaternary structure, the PsaA/B heterodimer binds the P700 divinyl chlorophyll special pair and subsequent electron acceptors. PSI consists of a core antenna complex that captures photons, and an electron transfer chain that converts photonic excitation into a charge separation. The cyanobacterial PSI reaction center is composed of one copy each of PsaA,B,C,D,E,F,I,J,K,L,M and X, and forms trimeric complexes. Requires PSI electron transfer chain: 5 divinyl chlorophyll a, 1 divinyl chlorophyll a', 2 phylloquinones and 3 4Fe-4S clusters. PSI core antenna: 90 divinyl chlorophyll a, 22 carotenoids, 3 phospholipids and 1 galactolipid. P700 is a divinyl chlorophyll a/divinyl chlorophyll a' dimer, A0 is one or more divinyl chlorophyll a, A1 is one or both phylloquinones and FX is a shared 4Fe-4S iron-sulfur center. as cofactor.

Its subcellular location is the cellular thylakoid membrane. It catalyses the reaction reduced [plastocyanin] + hnu + oxidized [2Fe-2S]-[ferredoxin] = oxidized [plastocyanin] + reduced [2Fe-2S]-[ferredoxin]. Its function is as follows. PsaA and PsaB bind P700, the primary electron donor of photosystem I (PSI), as well as the electron acceptors A0, A1 and FX. PSI is a plastocyanin/cytochrome c6-ferredoxin oxidoreductase, converting photonic excitation into a charge separation, which transfers an electron from the donor P700 chlorophyll pair to the spectroscopically characterized acceptors A0, A1, FX, FA and FB in turn. Oxidized P700 is reduced on the lumenal side of the thylakoid membrane by plastocyanin or cytochrome c6. The protein is Photosystem I P700 chlorophyll a apoprotein A1 of Prochlorococcus marinus (strain NATL2A).